Here is a 233-residue protein sequence, read N- to C-terminus: DnaA regulatory inactivator Hda (233 aa).

Belongs to the DnaA family. HdA subfamily. As to quaternary structure, the active form seems to be an ADP-bound monomer. Forms the RIDA complex (regulatory inactivation of DnaA) of ATP-DnaA, ADP-Hda and the DNA-loaded beta sliding clamp (dnaN).

Mediates the interaction of DNA replication initiator protein DnaA with DNA polymerase subunit beta sliding clamp (dnaN). Stimulates hydrolysis of ATP-DnaA to ADP-DnaA, rendering DnaA inactive for reinitiation, a process called regulatory inhibition of DnaA or RIDA. This chain is DnaA regulatory inactivator Hda, found in Photorhabdus laumondii subsp. laumondii (strain DSM 15139 / CIP 105565 / TT01) (Photorhabdus luminescens subsp. laumondii).